A 453-amino-acid chain; its full sequence is Sodium/alanine symporter AgcS (453 aa).

Topologically, residues 1-17 are extracellular; the sequence is MDFVSLVNTVNSFVWGP. A helical transmembrane segment spans residues 18 to 32; it reads YMLVLLLGTGIFLTL. Residues 33–67 are Cytoplasmic-facing; that stretch reads RLGFMQIHTLPYALKLAFSKHQDETSEGDISHFQA. A helical membrane pass occupies residues 68 to 89; that stretch reads LMTALAATIGTGNIAGVATAYV. Position 75 (T75) interacts with D-alanine. Residues T75 and G79 each contribute to the L-alanine site. Position 80 (N80) interacts with D-alanine. Residues 90-92 lie on the Extracellular side of the membrane; sequence LGG. A helical transmembrane segment spans residues 93-111; it reads PGAIFWMWVTAFFGMATKY. The Cytoplasmic segment spans residues 112–148; the sequence is AEAVLAIKYRTVDDNGEMAGGPMYFLEKGLPDHGLGK. Residues 149–179 traverse the membrane as a helical segment; it reads ILGVAFAFFGAFAAFGIGNMVQTNSVADAVA. D-alanine is bound at residue Q170. Residue Q170 coordinates L-alanine. Over 180-186 the chain is Extracellular; sequence SNFGVDP. Residues 187–202 form a helical membrane-spanning segment; sequence LITGFVLAIFTAAVIL. At 203–206 the chain is on the cytoplasmic side; it reads GGIK. Residues 207-233 traverse the membrane as a helical segment; that stretch reads SIGKATGIIVPFMAVFYILAGLVILAM. Over 234 to 258 the chain is Extracellular; sequence NIGYIIPAFGTIFSSAFNFSAGFGA. The helical transmembrane segment at 259–274 threads the bilayer; it reads LIGTAIMWGVKRGVFS. 273 to 274 contacts D-alanine; it reads FS. L-alanine is bound at residue 273–276; that stretch reads FSNE. At 275-300 the chain is on the cytoplasmic side; the sequence is NEAGLGSAPIAAAAAKTDHPGRQALV. Residues 301–322 form a helical membrane-spanning segment; sequence SMTGTFLDTIVVCTITGLVLTI. The Extracellular portion of the chain corresponds to 323 to 350; that stretch reads AGLKAFPGLTDLTGASLTAASFDALMPM. The helical transmembrane segment at 351 to 378 threads the bilayer; that stretch reads GGLIVTIGLVFFAYSTVLGWSYYGEKCF. At 379 to 386 the chain is on the cytoplasmic side; that stretch reads EYLIGTKG. Residues 387-403 traverse the membrane as a helical segment; that stretch reads IRLYRIAFVLVAFWGAT. Residues 404 to 408 are Extracellular-facing; sequence ASLPL. Residues 409 to 430 traverse the membrane as a helical segment; sequence VWNIADTLNGAMAIPNLIGLLL. Over 431–453 the chain is Cytoplasmic; the sequence is LSGVVVSETKAFNEIRKNEAKNA.

It belongs to the alanine or glycine:cation symporter (AGCS) (TC 2.A.25) family.

Its subcellular location is the cell membrane. It catalyses the reaction D-alanine(in) + Na(+)(in) = D-alanine(out) + Na(+)(out). It carries out the reaction L-alanine(in) + Na(+)(in) = L-alanine(out) + Na(+)(out). The catalysed reaction is glycine(in) + Na(+)(in) = glycine(out) + Na(+)(out). In terms of biological role, catalyzes the sodium-dependent uptake of extracellular D-alanine and L-alanine. Can also transport glycine. Binds glycine and both enantiomers of alanine, while strictly excluding other amino acids. This Methanococcus maripaludis (strain DSM 14266 / JCM 13030 / NBRC 101832 / S2 / LL) protein is Sodium/alanine symporter AgcS.